A 225-amino-acid polypeptide reads, in one-letter code: MDDITPDLLLRAYASGIFPMAPDAGSMELSWYLPEERGIMPLTGMHVPKKLMRLVMSGRMTVTADRAFDEVMRACAEPAPGRETTWISGRIRVLYGALHRQGNAHSIEVREGEKLVGGLYGVSLRGAFFGESMFSRERDASKVALVHLVAGLRKGRFTLLDTQYTTPHLTGLGGIGIPAADYQSLLHQALTVRAVWPDDFSLQALRESIASLRVPAGRTPAGDPP.

This sequence belongs to the L/F-transferase family.

It is found in the cytoplasm. It carries out the reaction N-terminal L-lysyl-[protein] + L-leucyl-tRNA(Leu) = N-terminal L-leucyl-L-lysyl-[protein] + tRNA(Leu) + H(+). The catalysed reaction is N-terminal L-arginyl-[protein] + L-leucyl-tRNA(Leu) = N-terminal L-leucyl-L-arginyl-[protein] + tRNA(Leu) + H(+). The enzyme catalyses L-phenylalanyl-tRNA(Phe) + an N-terminal L-alpha-aminoacyl-[protein] = an N-terminal L-phenylalanyl-L-alpha-aminoacyl-[protein] + tRNA(Phe). Functionally, functions in the N-end rule pathway of protein degradation where it conjugates Leu, Phe and, less efficiently, Met from aminoacyl-tRNAs to the N-termini of proteins containing an N-terminal arginine or lysine. This Gluconobacter oxydans (strain 621H) (Gluconobacter suboxydans) protein is Leucyl/phenylalanyl-tRNA--protein transferase.